A 172-amino-acid chain; its full sequence is Transcriptional repressor NrdR (172 aa).

The segment at Cys-3–Cys-34 is a zinc-finger region. The ATP-cone domain maps to Leu-46–Asp-136. The tract at residues Glu-152–Asp-172 is disordered. The span at Thr-161–Asp-172 shows a compositional bias: low complexity.

The protein belongs to the NrdR family. Zn(2+) is required as a cofactor.

Negatively regulates transcription of bacterial ribonucleotide reductase nrd genes and operons by binding to NrdR-boxes. This chain is Transcriptional repressor NrdR, found in Streptomyces clavuligerus.